A 731-amino-acid chain; its full sequence is RNA-binding protein RMD9-like, mitochondrial (731 aa).

Polar residues predominate over residues 1–10 (MIRLAQQTQV). Disordered stretches follow at residues 1 to 29 (MIRL…NSLT), 77 to 133 (GGNI…GNSI), and 590 to 630 (QNDR…FNNP). Low complexity predominate over residues 83-100 (NNNNHLAQNNSNNSNNHH). The segment covering 101 to 122 (NNNRNHHHNNNRNHHQNNHNHS) has biased composition (basic residues). Residue Ser132 is modified to Phosphoserine. Polar residues predominate over residues 598-617 (SNMNSTQISRTATPSPSLTP).

The protein belongs to the RMD9 family. As to quaternary structure, monomer. In terms of processing, phosphorylated. Phosphorylation promotes binding to RNA.

It is found in the mitochondrion inner membrane. Functionally, may be involved in the processing or stability of mitochondrial mRNAs. This is RNA-binding protein RMD9-like, mitochondrial from Saccharomyces cerevisiae (strain ATCC 204508 / S288c) (Baker's yeast).